Consider the following 1402-residue polypeptide: DNA-directed RNA polymerase subunit beta' (1402 aa).

Residues Cys-71, Cys-73, Cys-86, and Cys-89 each coordinate Zn(2+). Residues Asp-462, Asp-464, and Asp-466 each coordinate Mg(2+). Cys-811, Cys-885, Cys-892, and Cys-895 together coordinate Zn(2+). The interval 1379–1402 is disordered; the sequence is RKGTGAGSANQMLQDMTDQVPAAE. Over residues 1385–1395 the composition is skewed to polar residues; it reads GSANQMLQDMT.

This sequence belongs to the RNA polymerase beta' chain family. In terms of assembly, the RNAP catalytic core consists of 2 alpha, 1 beta, 1 beta' and 1 omega subunit. When a sigma factor is associated with the core the holoenzyme is formed, which can initiate transcription. Mg(2+) is required as a cofactor. The cofactor is Zn(2+).

The catalysed reaction is RNA(n) + a ribonucleoside 5'-triphosphate = RNA(n+1) + diphosphate. Its function is as follows. DNA-dependent RNA polymerase catalyzes the transcription of DNA into RNA using the four ribonucleoside triphosphates as substrates. This chain is DNA-directed RNA polymerase subunit beta', found in Agrobacterium fabrum (strain C58 / ATCC 33970) (Agrobacterium tumefaciens (strain C58)).